A 233-amino-acid chain; its full sequence is 7-cyano-7-deazaguanine synthase (233 aa).

13 to 23 (LSGGLDSTTCL) lines the ATP pocket. Zn(2+) contacts are provided by cysteine 197, cysteine 206, cysteine 209, and cysteine 212.

It belongs to the QueC family. Zn(2+) serves as cofactor.

The enzyme catalyses 7-carboxy-7-deazaguanine + NH4(+) + ATP = 7-cyano-7-deazaguanine + ADP + phosphate + H2O + H(+). Its pathway is purine metabolism; 7-cyano-7-deazaguanine biosynthesis. In terms of biological role, catalyzes the ATP-dependent conversion of 7-carboxy-7-deazaguanine (CDG) to 7-cyano-7-deazaguanine (preQ(0)). In Anaeromyxobacter sp. (strain Fw109-5), this protein is 7-cyano-7-deazaguanine synthase.